The following is a 494-amino-acid chain: Glutamate--tRNA ligase (494 aa).

The 'HIGH' region motif lies at 10–20; it reads PSPTGDPHVGT. Zn(2+) is bound by residues Cys-107, Cys-109, Cys-134, and His-136. The short motif at 251 to 255 is the 'KMSKS' region element; the sequence is KLSKR. Lys-254 is a binding site for ATP.

Belongs to the class-I aminoacyl-tRNA synthetase family. Glutamate--tRNA ligase type 1 subfamily. Monomer. Requires Zn(2+) as cofactor.

It localises to the cytoplasm. The catalysed reaction is tRNA(Glu) + L-glutamate + ATP = L-glutamyl-tRNA(Glu) + AMP + diphosphate. Catalyzes the attachment of glutamate to tRNA(Glu) in a two-step reaction: glutamate is first activated by ATP to form Glu-AMP and then transferred to the acceptor end of tRNA(Glu). The polypeptide is Glutamate--tRNA ligase (Pseudomonas paraeruginosa (strain DSM 24068 / PA7) (Pseudomonas aeruginosa (strain PA7))).